Reading from the N-terminus, the 395-residue chain is MAKEHFNRSKPHVNVGTIGHVDHGKTTLTAAITTVLAKRGLSELRSFDSIDNAPEEKERGITINTSHVEYQTANRHYAHVDCPGHADYVKNMVAGAAQMDGAIIVVAATDGPMPQTREHILLARQVNVPRLVVFMNKCDMVDDEEMLELVEMDMRELLSFYDFDGDNTPIIRGSALGALNGEPQWEDKVMELMEAVDNWVPLPERDIDKPFLMPVEDVFSITGRGTVATGRIETGIVKTGDEVQIIGLGAEGMKSVVTGVEMFRKILDEGQAGDNVGLLLRGIDKDQIKRGMVISHPGKITPHKRFKAEVYILKKEEGGRHTPFHNKYRPQFYIRTLDVTGEITLPEGTEMVMPGDNVTITVELIYPVACNVGLRFAIREGGRTVGAGQITELID.

In terms of domain architecture, tr-type G spans K10 to E204. The tract at residues G19 to T26 is G1. G19–T26 contributes to the GTP binding site. Position 26 (T26) interacts with Mg(2+). The tract at residues G60–N64 is G2. Positions D81 to G84 are G3. GTP-binding positions include D81–H85 and N136–D139. The G4 stretch occupies residues N136 to D139. Positions S174–L176 are G5.

This sequence belongs to the TRAFAC class translation factor GTPase superfamily. Classic translation factor GTPase family. EF-Tu/EF-1A subfamily. As to quaternary structure, monomer.

The protein localises to the cytoplasm. The enzyme catalyses GTP + H2O = GDP + phosphate + H(+). GTP hydrolase that promotes the GTP-dependent binding of aminoacyl-tRNA to the A-site of ribosomes during protein biosynthesis. This Porphyromonas gingivalis (strain ATCC 33277 / DSM 20709 / CIP 103683 / JCM 12257 / NCTC 11834 / 2561) protein is Elongation factor Tu.